The primary structure comprises 144 residues: Large ribosomal subunit protein uL16 (144 aa).

Residues Met1–Lys16 are compositionally biased toward basic residues. Residues Met1–Lys22 form a disordered region.

It belongs to the universal ribosomal protein uL16 family. In terms of assembly, part of the 50S ribosomal subunit.

Functionally, binds 23S rRNA and is also seen to make contacts with the A and possibly P site tRNAs. The chain is Large ribosomal subunit protein uL16 from Brevibacillus brevis (strain 47 / JCM 6285 / NBRC 100599).